The sequence spans 603 residues: Phosphoenolpyruvate carboxykinase [GTP] (603 aa).

Substrate-binding positions include arginine 87 and 209–211; that span reads YAG. Mn(2+) contacts are provided by lysine 218 and histidine 237. Substrate is bound at residue serine 258. 259 to 264 is a GTP binding site; the sequence is GSGKTS. The active site involves serine 260. Residue aspartate 275 coordinates Mn(2+). 365–367 contributes to the substrate binding site; the sequence is NAR. Residues arginine 367 and arginine 398 each coordinate GTP.

The protein belongs to the phosphoenolpyruvate carboxykinase [GTP] family. Mn(2+) serves as cofactor.

It localises to the cytoplasm. It carries out the reaction oxaloacetate + GTP = phosphoenolpyruvate + GDP + CO2. It participates in carbohydrate biosynthesis; gluconeogenesis. Catalyzes the conversion of oxaloacetate (OAA) to phosphoenolpyruvate (PEP), the rate-limiting step in the metabolic pathway that produces glucose from lactate and other precursors derived from the citric acid cycle. This chain is Phosphoenolpyruvate carboxykinase [GTP], found in Saccharolobus solfataricus (strain ATCC 35092 / DSM 1617 / JCM 11322 / P2) (Sulfolobus solfataricus).